A 274-amino-acid polypeptide reads, in one-letter code: Diaminopimelate epimerase (274 aa).

Substrate-binding residues include N13, Q45, and N63. C72 functions as the Proton donor in the catalytic mechanism. Substrate is bound by residues 73 to 74 (GN), N158, N191, and 209 to 210 (ER). Residue C218 is the Proton acceptor of the active site. 219-220 (GT) contacts substrate.

It belongs to the diaminopimelate epimerase family. Homodimer.

Its subcellular location is the cytoplasm. It carries out the reaction (2S,6S)-2,6-diaminopimelate = meso-2,6-diaminopimelate. Its pathway is amino-acid biosynthesis; L-lysine biosynthesis via DAP pathway; DL-2,6-diaminopimelate from LL-2,6-diaminopimelate: step 1/1. Functionally, catalyzes the stereoinversion of LL-2,6-diaminopimelate (L,L-DAP) to meso-diaminopimelate (meso-DAP), a precursor of L-lysine and an essential component of the bacterial peptidoglycan. The polypeptide is Diaminopimelate epimerase (Pelagibacter ubique (strain HTCC1062)).